Reading from the N-terminus, the 106-residue chain is Iron-sulfur cluster assembly protein CyaY (106 aa).

The protein belongs to the frataxin family.

Involved in iron-sulfur (Fe-S) cluster assembly. May act as a regulator of Fe-S biogenesis. This is Iron-sulfur cluster assembly protein CyaY from Escherichia coli (strain SMS-3-5 / SECEC).